The sequence spans 352 residues: Small ribosomal subunit biogenesis GTPase RsgA (352 aa).

Residues 1–11 (MTKRKLSKGQQ) are compositionally biased toward basic residues. Residues 1-35 (MTKRKLSKGQQRRVQENHKKRLQSKEKKNHVELDD) are disordered. Over residues 13-33 (RVQENHKKRLQSKEKKNHVEL) the composition is skewed to basic and acidic residues. The region spanning 114–276 (YYDGIKPIAA…VIDSPGVREF (163 aa)) is the CP-type G domain. GTP-binding positions include 162–165 (NKVD) and 216–224 (GQSGVGKSS). The Zn(2+) site is built by Cys300, Cys305, His307, and Cys313.

Belongs to the TRAFAC class YlqF/YawG GTPase family. RsgA subfamily. In terms of assembly, monomer. Associates with 30S ribosomal subunit, binds 16S rRNA. The cofactor is Zn(2+).

Its subcellular location is the cytoplasm. Functionally, one of several proteins that assist in the late maturation steps of the functional core of the 30S ribosomal subunit. Helps release RbfA from mature subunits. May play a role in the assembly of ribosomal proteins into the subunit. Circularly permuted GTPase that catalyzes slow GTP hydrolysis, GTPase activity is stimulated by the 30S ribosomal subunit. The protein is Small ribosomal subunit biogenesis GTPase RsgA of Proteus mirabilis (strain HI4320).